We begin with the raw amino-acid sequence, 369 residues long: tRNA pseudouridine synthase D (369 aa).

The active-site Nucleophile is the Asp-80. In terms of domain architecture, TRUD spans 156–318 (GIPNWFGEQR…LKQERRALRL (163 aa)).

It belongs to the pseudouridine synthase TruD family.

The enzyme catalyses uridine(13) in tRNA = pseudouridine(13) in tRNA. Responsible for synthesis of pseudouridine from uracil-13 in transfer RNAs. This chain is tRNA pseudouridine synthase D, found in Xanthomonas axonopodis pv. citri (strain 306).